We begin with the raw amino-acid sequence, 679 residues long: Pollen receptor-like kinase 4 (679 aa).

The N-terminal stretch at 1 to 39 (MLTWETPVMLASNTASTKKLAFITTFLIIVLCPVTMVMS) is a signal peptide. LRR repeat units lie at residues 118–141 (IKNL…VKNF), 142–165 (GALK…AFDG), 167–191 (HHLK…AYLP), 193–217 (LLEL…DLKL), and 234–257 (SNMD…PCSS). Positions 252-269 (LSPCSSDSGSSPDLPSSP) are enriched in low complexity. Positions 252-271 (LSPCSSDSGSSPDLPSSPTE) are disordered. Residues 278 to 298 (FFIIAIVLIVIGIILMIISLV) traverse the membrane as a helical segment. The segment at 311 to 344 (SAYPSAGQDRTEKYNYDQSTDKDKAADSVTSYTS) is disordered. A compositionally biased stretch (basic and acidic residues) spans 319-336 (DRTEKYNYDQSTDKDKAA). A Protein kinase domain is found at 372 to 646 (RASAEVLGSG…RDAVEKIERL (275 aa)). S374 carries the phosphoserine modification. Residues 378-386 (LGSGSFGSS) and K400 contribute to the ATP site. Phosphoserine is present on residues S452 and S455. The residue at position 472 (T472) is a Phosphothreonine. A Phosphotyrosine modification is found at Y542.

Belongs to the protein kinase superfamily. Ser/Thr protein kinase family. As to quaternary structure, interacts in vitro with ROPGEF1 (via PRONE domain). Interacts weakly with the GRI peptide. As to expression, expressed in pollen and/or in flowers, but not in leaves.

The protein resides in the membrane. The enzyme catalyses L-seryl-[protein] + ATP = O-phospho-L-seryl-[protein] + ADP + H(+). The catalysed reaction is L-threonyl-[protein] + ATP = O-phospho-L-threonyl-[protein] + ADP + H(+). Its function is as follows. Receptor-like kinase involved in the control of pollen germination and pollen tube polar growth. Can phosphorylate ROPGEF1 in vitro. In Arabidopsis thaliana (Mouse-ear cress), this protein is Pollen receptor-like kinase 4.